Consider the following 220-residue polypeptide: LHFPL tetraspan subfamily member 1 protein (220 aa).

The N-terminal stretch at 1–20 (MRNSLTMVGTFWAFLSLVTA) is a signal peptide. 2 consecutive transmembrane segments (helical) span residues 86 to 106 (VVTG…VLGC) and 122 to 142 (AAQF…PLGW). N-linked (GlcNAc...) asparagine glycosylation is present at Asn153. Residues 165-185 (LGWAYYCAGGGAAAAMLICTW) traverse the membrane as a helical segment.

This sequence belongs to the LHFP family. In terms of tissue distribution, widely expressed. Strongly expressed in vagina and ovary. Weakly expressed in spleen, kidney, thymus, testis, brain, lung, intestine and uterus.

The protein localises to the membrane. The protein is LHFPL tetraspan subfamily member 1 protein of Mus musculus (Mouse).